The chain runs to 432 residues: Glutamyl-tRNA reductase (432 aa).

Substrate-binding positions include threonine 55–arginine 58, serine 113, glutamate 118–glutamine 120, and glutamine 124. Residue cysteine 56 is the Nucleophile of the active site. Glycine 193–isoleucine 198 is an NADP(+) binding site.

This sequence belongs to the glutamyl-tRNA reductase family. In terms of assembly, homodimer.

It carries out the reaction (S)-4-amino-5-oxopentanoate + tRNA(Glu) + NADP(+) = L-glutamyl-tRNA(Glu) + NADPH + H(+). It participates in porphyrin-containing compound metabolism; protoporphyrin-IX biosynthesis; 5-aminolevulinate from L-glutamyl-tRNA(Glu): step 1/2. Its function is as follows. Catalyzes the NADPH-dependent reduction of glutamyl-tRNA(Glu) to glutamate 1-semialdehyde (GSA). The protein is Glutamyl-tRNA reductase of Paracidovorax citrulli (strain AAC00-1) (Acidovorax citrulli).